The following is a 330-amino-acid chain: Phosphate acyltransferase (330 aa).

It belongs to the PlsX family. In terms of assembly, homodimer. Probably interacts with PlsY.

The protein localises to the cytoplasm. It catalyses the reaction a fatty acyl-[ACP] + phosphate = an acyl phosphate + holo-[ACP]. The protein operates within lipid metabolism; phospholipid metabolism. In terms of biological role, catalyzes the reversible formation of acyl-phosphate (acyl-PO(4)) from acyl-[acyl-carrier-protein] (acyl-ACP). This enzyme utilizes acyl-ACP as fatty acyl donor, but not acyl-CoA. This is Phosphate acyltransferase from Carboxydothermus hydrogenoformans (strain ATCC BAA-161 / DSM 6008 / Z-2901).